The following is a 357-amino-acid chain: Red-sensitive opsin (357 aa).

Over 1–49 (MAEQWGKQVFAARRQNEDTTRGSAFTYTNSNHTRDPFEGPNYHIAPRWV) the chain is Extracellular. N31 carries N-linked (GlcNAc...) asparagine glycosylation. A helical transmembrane segment spans residues 50 to 74 (YNLATLWMFFVVVLSVFTNGLVLVA). Residues 75–86 (TAKFKKLRHPLN) are Cytoplasmic-facing. A helical transmembrane segment spans residues 87–112 (WILSNLAIADLGETVFASTISVCNQF). Over 113–126 (FGYFILGHPMCVFE) the chain is Extracellular. A disulfide bond links C123 and C200. A helical membrane pass occupies residues 127–146 (GYVVSTCGIAALWSLTIISW). The Cytoplasmic portion of the chain corresponds to 147 to 165 (ERWVVVCKPFGNVKFDAKW). The chain crosses the membrane as a helical span at residues 166 to 189 (AIGGIVFSWVWSAVWCAPPVFGWS). The Extracellular segment spans residues 190–215 (RYWPHGLKTSCGPDVFSGSDDPGVQS). The chain crosses the membrane as a helical span at residues 216–243 (YMIVLMITCCIIPLAIIILCYLAVWLAI). The Cytoplasmic portion of the chain corresponds to 244–265 (RAVAMQQKESESTQKAEREVSR). The chain crosses the membrane as a helical span at residues 266–289 (MVVVMIVAYCVCWGPYTFFACFAA). The Extracellular segment spans residues 290–297 (ANPGYAFH). A helical membrane pass occupies residues 298-322 (PLAAAMPAYFAKSATIYNPVIYVFM). K309 bears the N6-(retinylidene)lysine mark. The Cytoplasmic segment spans residues 323-357 (NRQFRTCIMQLFGKQVDDGSEVSTSKTEVSSVAPA).

This sequence belongs to the G-protein coupled receptor 1 family. Opsin subfamily. In terms of processing, phosphorylated on some or all of the serine and threonine residues present in the C-terminal region. In terms of tissue distribution, the color pigments are found in the cone photoreceptor cells.

Its subcellular location is the membrane. In terms of biological role, visual pigments are the light-absorbing molecules that mediate vision. They consist of an apoprotein, opsin, covalently linked to cis-retinal. This Oryzias latipes (Japanese rice fish) protein is Red-sensitive opsin.